A 241-amino-acid polypeptide reads, in one-letter code: MSMLCYTLIIAFLIGIWAAPKSEDNVPLGSPATSDLSDTSCAKTHEALKTSRNIDQHYPAPKKAEDQEFGSAANIIVDPKLFQKRRFQSPRVLFSTQPPPLSRDEQSVDNANSLNRNIRAKREDHPVHKRGEYSVCDSVNVWVANKTTATDIRGNLVTVMVDVNINNNVYKQYFFETKCRNPNPVPTGCRGIDARHWNSYCTTTNTFVKALTMEGNQASWRFIRIDSACVCVISRKNENFG.

The N-terminal stretch at 1 to 18 (MSMLCYTLIIAFLIGIWA) is a signal peptide. Residues 19 to 122 (APKSEDNVPL…SLNRNIRAKR (104 aa)) constitute a propeptide that is removed on maturation. Intrachain disulfides connect C136–C201, C179–C229, and C189–C231. N-linked (GlcNAc...) asparagine glycosylation occurs at N145.

The protein belongs to the NGF-beta family. In terms of assembly, homodimer; non-covalently linked. As to expression, expressed by the venom gland.

It is found in the secreted. Functionally, nerve growth factor is important for the development and maintenance of the sympathetic and sensory nervous systems. It stimulates division and differentiation of sympathetic and embryonic sensory neurons as well as basal forebrain cholinergic neurons in the brain. Its relevance in the snake venom is not clear. However, it has been shown to inhibit metalloproteinase-dependent proteolysis of platelet glycoprotein Ib alpha, suggesting a metalloproteinase inhibition to prevent metalloprotease autodigestion and/or protection against prey proteases. Binds a lipid between the two protein chains in the homodimer. The lipid-bound form promotes histamine relase from mouse mast cells, contrary to the lipid-free form. In Crotalus durissus terrificus (South American rattlesnake), this protein is Venom nerve growth factor.